An 876-amino-acid polypeptide reads, in one-letter code: Protein argonaute 17 (876 aa).

One can recognise a PAZ domain in the interval 246–338 (PVVDYVAQLL…LPLEVCKIAE (93 aa)). A Piwi domain is found at 514 to 834 (LLIVILPNNN…LSSRARCYIK (321 aa)). The tract at residues 839-859 (GDSTSHTSLPSEEDSSAASET) is disordered.

Belongs to the argonaute family. Ago subfamily.

Functionally, probably involved in the RNA silencing pathway. May bind to short RNAs such as microRNAs (miRNAs) or short interfering RNAs (siRNAs), and represses the translation of mRNAs which are complementary to them. This Oryza sativa subsp. japonica (Rice) protein is Protein argonaute 17 (AGO17).